A 1247-amino-acid polypeptide reads, in one-letter code: Respiratory nitrate reductase 1 alpha chain (1247 aa).

The 4Fe-4S Mo/W bis-MGD-type domain occupies 43 to 107 (DKIVRSTHGV…SYSWYLYSAN (65 aa)). 4 residues coordinate [4Fe-4S] cluster: H50, C54, C58, and C93. D223 provides a ligand contact to Mo-bis(molybdopterin guanine dinucleotide).

The protein belongs to the prokaryotic molybdopterin-containing oxidoreductase family. As to quaternary structure, dimer of heterotrimers each composed of an alpha, a beta and a gamma chain. Alpha and beta are catalytic chains; gamma chains are involved in binding the enzyme complex to the cytoplasmic membrane. Interacts with the NarJ chaperone. [4Fe-4S] cluster serves as cofactor. The cofactor is Mo-bis(molybdopterin guanine dinucleotide).

The protein localises to the cell membrane. The catalysed reaction is nitrate + a quinol = a quinone + nitrite + H2O. The nitrate reductase enzyme complex allows E.coli to use nitrate as an electron acceptor during anaerobic growth. The alpha chain is the actual site of nitrate reduction. The chain is Respiratory nitrate reductase 1 alpha chain (narG) from Escherichia coli (strain K12).